The following is a 150-amino-acid chain: Globin-1 (150 aa).

In terms of domain architecture, Globin spans 11-150 (ALTAAEKATI…MICILLRSSY (140 aa)). Heme b contacts are provided by histidine 74 and histidine 106.

The protein belongs to the globin family. In terms of assembly, monomer.

This Petromyzon marinus (Sea lamprey) protein is Globin-1.